Reading from the N-terminus, the 836-residue chain is DNA gyrase subunit A (836 aa).

Positions 46-510 constitute a Topo IIA-type catalytic domain; the sequence is LPDARDGLKP…ISEEIDDESL (465 aa). Tyr-134 functions as the O-(5'-phospho-DNA)-tyrosine intermediate in the catalytic mechanism. A GyrA-box motif is present at residues 537 to 543; it reads QHRGGVG.

It belongs to the type II topoisomerase GyrA/ParC subunit family. Heterotetramer, composed of two GyrA and two GyrB chains. In the heterotetramer, GyrA contains the active site tyrosine that forms a transient covalent intermediate with DNA, while GyrB binds cofactors and catalyzes ATP hydrolysis.

It is found in the cytoplasm. It carries out the reaction ATP-dependent breakage, passage and rejoining of double-stranded DNA.. Functionally, a type II topoisomerase that negatively supercoils closed circular double-stranded (ds) DNA in an ATP-dependent manner to modulate DNA topology and maintain chromosomes in an underwound state. Negative supercoiling favors strand separation, and DNA replication, transcription, recombination and repair, all of which involve strand separation. Also able to catalyze the interconversion of other topological isomers of dsDNA rings, including catenanes and knotted rings. Type II topoisomerases break and join 2 DNA strands simultaneously in an ATP-dependent manner. The polypeptide is DNA gyrase subunit A (Mycoplasma genitalium (strain ATCC 33530 / DSM 19775 / NCTC 10195 / G37) (Mycoplasmoides genitalium)).